A 2390-amino-acid chain; its full sequence is Spectrin beta chain, non-erythrocytic 2 (2390 aa).

S2 carries the N-acetylserine modification. Residues 2–278 (SSTLSPTDFD…IITYVATYYH (277 aa)) are actin-binding. Phosphoserine occurs at positions 6 and 31. 2 consecutive Calponin-homology (CH) domains span residues 57–161 (AVQK…LRFQ) and 176–281 (KSAK…HYFS). Spectrin repeat units follow at residues 306-414 (LVEK…LALR), 427-527 (AARF…RERL), 532-639 (ELQK…RLEE), 642-744 (RLWR…QRLA), 749-849 (LYQF…RALE), and 855-954 (YTML…KAAL). S959 is modified (phosphoserine). Spectrin repeat units lie at residues 960 to 1063 (IQNY…SLGE), 1066 to 1169 (RLQD…GRLA), 1174 to 1262 (FQGF…RHKK), 1279 to 1379 (EQQH…ARSL), 1384 to 1485 (RAEL…RRLQ), 1489 to 1586 (EQHQ…RLED), 1589 to 1692 (RAQQ…RLQE), 1696 to 1797 (LCQL…GQVL), 1801 to 1904 (YELQ…QLLL), 1910 to 2010 (FRFF…DWLQ), and 2017 to 2076 (VFGR…EKLT). Phosphoserine is present on S1073. Over residues 2081–2096 (REKERKRKREEEERRK) the composition is skewed to basic and acidic residues. Disordered regions lie at residues 2081–2222 (REKE…EQME) and 2331–2390 (SSAS…KKNK). Positions 2116 to 2125 (QTASDTTWDG) are enriched in polar residues. Phosphoserine occurs at positions 2171 and 2199. The 111-residue stretch at 2218 to 2328 (QEQMEGMLCR…WLRVVNAAIA (111 aa)) folds into the PH domain. T2354 is modified (phosphothreonine). At S2359 the chain carries Phosphoserine. A compositionally biased stretch (basic and acidic residues) spans 2370–2383 (RSKDGREREREKRF).

Belongs to the spectrin family. In terms of tissue distribution, highly expressed in brain, kidney, pancreas, and liver, and at lower levels in lung and placenta.

Its subcellular location is the cytoplasm. It is found in the cytoskeleton. It localises to the cell cortex. Probably plays an important role in neuronal membrane skeleton. The sequence is that of Spectrin beta chain, non-erythrocytic 2 (SPTBN2) from Homo sapiens (Human).